A 553-amino-acid chain; its full sequence is Transcriptional regulator HilA (553 aa).

The segment at residues Asn-11–Arg-107 is a DNA-binding region (ompR/PhoB-type). Asp-62 is subject to 4-aspartylphosphate. A TPR repeat occupies Ala-372–Arg-405.

The main transcriptional regulator of the Salmonella pathogenicity island 1 (SPI1) gene expression. Activates the expression of invasion genes by a direct action at their promoters and also indirectly by increasing the level of invF. Also binds upstream of prgH and directly activates the expression of prgHIJK operon. This Salmonella paratyphi A (strain ATCC 9150 / SARB42) protein is Transcriptional regulator HilA (hilA).